We begin with the raw amino-acid sequence, 149 residues long: Transcriptional repressor NrdR (149 aa).

A zinc finger lies at 3–34 (CPFCGNLETQVVETRVSEDADFIRRRRQCGAC). Positions 49–139 (PAIVKKDGRR…VYRSFEDIDE (91 aa)) constitute an ATP-cone domain.

It belongs to the NrdR family. Requires Zn(2+) as cofactor.

In terms of biological role, negatively regulates transcription of bacterial ribonucleotide reductase nrd genes and operons by binding to NrdR-boxes. This chain is Transcriptional repressor NrdR, found in Polaromonas sp. (strain JS666 / ATCC BAA-500).